A 102-amino-acid polypeptide reads, in one-letter code: RNA-binding protein Hfq (102 aa).

The Sm domain maps to 9–68 (DPFVNALRRERVPVSIYLVNGIKLQGQIESFDQFVILLKNTVSQMVYKHAISTVVPSRPV). The interval 63–102 (VPSRPVSHHSNNAGGGASNNYHHGSNAQGSTAQQDSEETE) is disordered. Residues 70-88 (HHSNNAGGGASNNYHHGSN) are compositionally biased toward low complexity.

This sequence belongs to the Hfq family. In terms of assembly, homohexamer.

In terms of biological role, RNA chaperone that binds small regulatory RNA (sRNAs) and mRNAs to facilitate mRNA translational regulation in response to envelope stress, environmental stress and changes in metabolite concentrations. Also binds with high specificity to tRNAs. The polypeptide is RNA-binding protein Hfq (Salmonella heidelberg (strain SL476)).